We begin with the raw amino-acid sequence, 856 residues long: Structure-specific endonuclease subunit SLX4 (856 aa).

Positions 1-19 are enriched in polar residues; the sequence is MDNAAIASQSNTPPSNGRS. 9 disordered regions span residues 1–24, 38–65, 88–121, 139–202, 296–326, 362–392, 621–640, 668–689, and 715–742; these read MDNAAIASQSNTPPSNGRSSARFV, VIEPSSPFSPPSPSTLLTSLSKSPSHKI, VDSPKRQDKSITGSKAKPASTMRHGQRTASHKMA, KTRK…DNEL, GIQTPTESRPATNDSQSISSKQQRVKVKKPQ, KKMGVTKRTSGTERANAARGKSDTLKNGNGP, SKSSKLEPKPNQRNHKSQGD, RLAKTSVKSQEPKSFSLSNEGP, and DSVGEALPLSPSHSSNGNGTLHHPQDCD. Residues 51 to 60 show a composition bias toward low complexity; that stretch reads STLLTSLSKS. The segment covering 139–152 has biased composition (basic residues); the sequence is KTRKKKAATAKRTR. Over residues 296 to 309 the composition is skewed to polar residues; that stretch reads GIQTPTESRPATND. Residues 673–686 are compositionally biased toward polar residues; the sequence is SVKSQEPKSFSLSN.

The protein belongs to the SLX4 family. Forms a heterodimer with SLX1. In terms of processing, phosphorylated in response to DNA damage.

It localises to the nucleus. Functionally, regulatory subunit of the SLX1-SLX4 structure-specific endonuclease that resolves DNA secondary structures generated during DNA repair and recombination. Has endonuclease activity towards branched DNA substrates, introducing single-strand cuts in duplex DNA close to junctions with ss-DNA. This Blastomyces gilchristii (strain SLH14081) (Blastomyces dermatitidis) protein is Structure-specific endonuclease subunit SLX4.